A 325-amino-acid chain; its full sequence is Cytochrome c1, heme protein, mitochondrial (325 aa).

The N-terminal 84 residues, 1–84 (MAAAAATLRG…AVALHSAVSA (84 aa)), are a transit peptide targeting the mitochondrion. The Mitochondrial intermembrane segment spans residues 85 to 281 (SDLELHPPSY…TFLRWAAEPE (197 aa)). One can recognise a Cytochrome c domain in the interval 108–209 (TSIRRGFQVY…IVRARHGGED (102 aa)). Heme c contacts are provided by Cys-121, Cys-124, His-125, and Met-244. A helical transmembrane segment spans residues 282–315 (HDHRKRMGLKMLLMMGLLLPLVYAMKRHKWSVLK). At 316-325 (SRKLAYRPPK) the chain is on the mitochondrial matrix side.

It belongs to the cytochrome c family. In terms of assembly, component of the ubiquinol-cytochrome c oxidoreductase (cytochrome b-c1 complex, complex III, CIII), a multisubunit enzyme composed of 11 subunits. The complex is composed of 3 respiratory subunits cytochrome b, cytochrome c1 and Rieske protein UQCRFS1, 2 core protein subunits UQCRC1/QCR1 and UQCRC2/QCR2, and 6 low-molecular weight protein subunits UQCRH/QCR6, UQCRB/QCR7, UQCRQ/QCR8, UQCR10/QCR9, UQCR11/QCR10 and subunit 9, the cleavage product of Rieske protein UQCRFS1. The complex exists as an obligatory dimer and forms supercomplexes (SCs) in the inner mitochondrial membrane with NADH-ubiquinone oxidoreductase (complex I, CI) and cytochrome c oxidase (complex IV, CIV), resulting in different assemblies (supercomplex SCI(1)III(2)IV(1) and megacomplex MCI(2)III(2)IV(2)). Interacts with FLVCR2; this interaction occurs in the absence of heme and is disrupted upon heme binding. Heme c is required as a cofactor.

The protein resides in the mitochondrion inner membrane. It carries out the reaction a quinol + 2 Fe(III)-[cytochrome c](out) = a quinone + 2 Fe(II)-[cytochrome c](out) + 2 H(+)(out). Component of the ubiquinol-cytochrome c oxidoreductase, a multisubunit transmembrane complex that is part of the mitochondrial electron transport chain which drives oxidative phosphorylation. The respiratory chain contains 3 multisubunit complexes succinate dehydrogenase (complex II, CII), ubiquinol-cytochrome c oxidoreductase (cytochrome b-c1 complex, complex III, CIII) and cytochrome c oxidase (complex IV, CIV), that cooperate to transfer electrons derived from NADH and succinate to molecular oxygen, creating an electrochemical gradient over the inner membrane that drives transmembrane transport and the ATP synthase. The cytochrome b-c1 complex catalyzes electron transfer from ubiquinol to cytochrome c, linking this redox reaction to translocation of protons across the mitochondrial inner membrane, with protons being carried across the membrane as hydrogens on the quinol. In the process called Q cycle, 2 protons are consumed from the matrix, 4 protons are released into the intermembrane space and 2 electrons are passed to cytochrome c. Cytochrome c1 is a catalytic core subunit containing a c-type heme. It transfers electrons from the [2Fe-2S] iron-sulfur cluster of the Rieske protein to cytochrome c. The chain is Cytochrome c1, heme protein, mitochondrial (CYC1) from Bos taurus (Bovine).